The chain runs to 657 residues: tRNA 5-methylaminomethyl-2-thiouridine biosynthesis bifunctional protein MnmC (657 aa).

The interval 1-239 (MTDRIVPATL…KRAMLVGEFA (239 aa)) is tRNA (mnm(5)s(2)U34)-methyltransferase. The FAD-dependent cmnm(5)s(2)U34 oxidoreductase stretch occupies residues 263 to 657 (IGAGLAGCAV…VRALRHGRVA (395 aa)).

This sequence in the N-terminal section; belongs to the methyltransferase superfamily. tRNA (mnm(5)s(2)U34)-methyltransferase family. It in the C-terminal section; belongs to the DAO family. Requires FAD as cofactor.

It is found in the cytoplasm. It catalyses the reaction 5-aminomethyl-2-thiouridine(34) in tRNA + S-adenosyl-L-methionine = 5-methylaminomethyl-2-thiouridine(34) in tRNA + S-adenosyl-L-homocysteine + H(+). Its function is as follows. Catalyzes the last two steps in the biosynthesis of 5-methylaminomethyl-2-thiouridine (mnm(5)s(2)U) at the wobble position (U34) in tRNA. Catalyzes the FAD-dependent demodification of cmnm(5)s(2)U34 to nm(5)s(2)U34, followed by the transfer of a methyl group from S-adenosyl-L-methionine to nm(5)s(2)U34, to form mnm(5)s(2)U34. This Burkholderia pseudomallei (strain 668) protein is tRNA 5-methylaminomethyl-2-thiouridine biosynthesis bifunctional protein MnmC.